The sequence spans 326 residues: Acetyl-coenzyme A carboxylase carboxyl transferase subunit beta (326 aa).

The region spanning 29–298 (LWIKCEACGT…TLISDESLET (270 aa)) is the CoA carboxyltransferase N-terminal domain. Positions 33, 36, 52, and 55 each coordinate Zn(2+). The C4-type zinc finger occupies 33-55 (CEACGTLTYTKDLQANQMVCPEC). A disordered region spans residues 302–326 (CHLPFQAESHNLSTTDNKIQPTPQG). The span at 309–326 (ESHNLSTTDNKIQPTPQG) shows a compositional bias: polar residues.

It belongs to the AccD/PCCB family. As to quaternary structure, acetyl-CoA carboxylase is a heterohexamer composed of biotin carboxyl carrier protein (AccB), biotin carboxylase (AccC) and two subunits each of ACCase subunit alpha (AccA) and ACCase subunit beta (AccD). Zn(2+) serves as cofactor.

The protein localises to the cytoplasm. It carries out the reaction N(6)-carboxybiotinyl-L-lysyl-[protein] + acetyl-CoA = N(6)-biotinyl-L-lysyl-[protein] + malonyl-CoA. Its pathway is lipid metabolism; malonyl-CoA biosynthesis; malonyl-CoA from acetyl-CoA: step 1/1. Component of the acetyl coenzyme A carboxylase (ACC) complex. Biotin carboxylase (BC) catalyzes the carboxylation of biotin on its carrier protein (BCCP) and then the CO(2) group is transferred by the transcarboxylase to acetyl-CoA to form malonyl-CoA. The protein is Acetyl-coenzyme A carboxylase carboxyl transferase subunit beta of Trichodesmium erythraeum (strain IMS101).